The following is a 389-amino-acid chain: Dihydroorotase (389 aa).

The Zn(2+) site is built by histidine 51 and histidine 53. Substrate contacts are provided by residues 53-55 (HVR) and asparagine 85. Zn(2+)-binding residues include lysine 133, histidine 158, histidine 192, and aspartate 254. Lysine 133 is subject to N6-carboxylysine. Aspartate 254 is a catalytic residue. Residues histidine 258 and 272–273 (PG) contribute to the substrate site.

This sequence belongs to the metallo-dependent hydrolases superfamily. DHOase family. Class I DHOase subfamily. Zn(2+) serves as cofactor.

It catalyses the reaction (S)-dihydroorotate + H2O = N-carbamoyl-L-aspartate + H(+). It participates in pyrimidine metabolism; UMP biosynthesis via de novo pathway; (S)-dihydroorotate from bicarbonate: step 3/3. Functionally, catalyzes the reversible cyclization of carbamoyl aspartate to dihydroorotate. This Sulfurisphaera tokodaii (strain DSM 16993 / JCM 10545 / NBRC 100140 / 7) (Sulfolobus tokodaii) protein is Dihydroorotase.